Reading from the N-terminus, the 137-residue chain is MVVIRLARGGSKKNPFYHIVVADRRKPRDGRFIERVGYYNPMARGQDIRLQLEKERISHWLNQGAQTSLRVKHLIKKLEKSPEEAQKGGMRKGEFKRLQAEQAAKAQKKAVATEEPKAEEAKEAPPAESQAAEGKEE.

Basic and acidic residues-rich tracts occupy residues 80–99 and 111–125; these read KSPE…KRLQ and VATE…KEAP. A disordered region spans residues 80-137; that stretch reads KSPEEAQKGGMRKGEFKRLQAEQAAKAQKKAVATEEPKAEEAKEAPPAESQAAEGKEE. Residues 126 to 137 are compositionally biased toward low complexity; it reads PAESQAAEGKEE.

It belongs to the bacterial ribosomal protein bS16 family.

The sequence is that of Small ribosomal subunit protein bS16 from Coxiella burnetii (strain Dugway 5J108-111).